The following is a 284-amino-acid chain: Distal membrane arm assembly component 2 (284 aa).

The protein belongs to the ATP synthase subunit s family. Associates with mitochondrial complex I assembly intermediates during its biogenesis.

Its function is as follows. Involved in the assembly of the mitochondrial membrane respiratory chain NADH dehydrogenase (Complex I). This Drosophila melanogaster (Fruit fly) protein is Distal membrane arm assembly component 2.